Consider the following 175-residue polypeptide: Thioredoxin-like protein CITRX, chloroplastic (175 aa).

A chloroplast-targeting transit peptide spans 1 to 64 (MQAASLAFHP…KPPAVGKYVR (64 aa)). Residues 74 to 175 (AKEIQELIKG…MMRDIIDNDL (102 aa)) form the Thioredoxin domain. Catalysis depends on nucleophile residues Cys-98 and Cys-101. Cys-98 and Cys-101 are disulfide-bonded.

This sequence belongs to the thioredoxin family. Plant CITRX-type subfamily. As to quaternary structure, interacts with Cf-9 resistance protein.

It is found in the plastid. It localises to the chloroplast. Functionally, probable thiol-disulfide oxidoreductase that may play a role in proper chloroplast development. In Solanum lycopersicum (Tomato), this protein is Thioredoxin-like protein CITRX, chloroplastic.